The primary structure comprises 223 residues: Thymidine kinase (223 aa).

Residues 19-26 (GPMFAGKT) and 96-99 (DEVQ) each bind ATP. E97 functions as the Proton acceptor in the catalytic mechanism. Residues C153, C156, C191, and H194 each contribute to the Zn(2+) site.

The protein belongs to the thymidine kinase family. As to quaternary structure, homotetramer.

The protein localises to the cytoplasm. The enzyme catalyses thymidine + ATP = dTMP + ADP + H(+). The protein is Thymidine kinase of Ureaplasma urealyticum serovar 10 (strain ATCC 33699 / Western).